The following is a 145-amino-acid chain: MAALTGLWGSFAHVSRAFSQRCFSTSGSLSAVQKMTRVRVVDNSALGSTPYHRPPRCIHVYNKSGVGKVGDQILLAIRGQKKKALIVGHRMPGSRMTPKFDSNNVVLIEDNGNPVGTRIKIPIPTSLRRREGEYSKVLAIAQNFV.

Residues methionine 1–serine 30 constitute a mitochondrion transit peptide.

The protein belongs to the universal ribosomal protein uL14 family. Component of the mitochondrial ribosome large subunit (39S) which comprises a 16S rRNA and about 50 distinct proteins. Interacts with MALSU1.

The protein resides in the mitochondrion. In terms of biological role, may form part of 2 intersubunit bridges in the assembled ribosome. Upon binding to MALSU1, intersubunit bridge formation is blocked, preventing ribosome formation and repressing translation. This chain is Large ribosomal subunit protein uL14m (Mrpl14), found in Mus musculus (Mouse).